The primary structure comprises 425 residues: UPF0597 protein VSAL_I0741 (425 aa).

Belongs to the UPF0597 family.

The protein is UPF0597 protein VSAL_I0741 of Aliivibrio salmonicida (strain LFI1238) (Vibrio salmonicida (strain LFI1238)).